Consider the following 223-residue polypeptide: ATP-dependent dethiobiotin synthetase BioD (223 aa).

T16 serves as a coordination point for Mg(2+). K37 is an active-site residue. S41 lines the substrate pocket. 2 residues coordinate Mg(2+): D50 and E111. Residues D50, 111 to 114, and 171 to 172 contribute to the ATP site; these read EGAG and NR.

This sequence belongs to the dethiobiotin synthetase family. Homodimer. Requires Mg(2+) as cofactor.

The protein resides in the cytoplasm. The enzyme catalyses (7R,8S)-7,8-diammoniononanoate + CO2 + ATP = (4R,5S)-dethiobiotin + ADP + phosphate + 3 H(+). It participates in cofactor biosynthesis; biotin biosynthesis; biotin from 7,8-diaminononanoate: step 1/2. Its function is as follows. Catalyzes a mechanistically unusual reaction, the ATP-dependent insertion of CO2 between the N7 and N8 nitrogen atoms of 7,8-diaminopelargonic acid (DAPA, also called 7,8-diammoniononanoate) to form a ureido ring. This is ATP-dependent dethiobiotin synthetase BioD from Anaeromyxobacter sp. (strain K).